Consider the following 305-residue polypeptide: Porphobilinogen deaminase (305 aa).

An S-(dipyrrolylmethanemethyl)cysteine modification is found at cysteine 238.

The protein belongs to the HMBS family. As to quaternary structure, monomer. Requires dipyrromethane as cofactor.

The enzyme catalyses 4 porphobilinogen + H2O = hydroxymethylbilane + 4 NH4(+). Its pathway is porphyrin-containing compound metabolism; protoporphyrin-IX biosynthesis; coproporphyrinogen-III from 5-aminolevulinate: step 2/4. In terms of biological role, tetrapolymerization of the monopyrrole PBG into the hydroxymethylbilane pre-uroporphyrinogen in several discrete steps. In Rubrobacter xylanophilus (strain DSM 9941 / JCM 11954 / NBRC 16129 / PRD-1), this protein is Porphobilinogen deaminase.